The following is a 539-amino-acid chain: GMP synthase [glutamine-hydrolyzing] (539 aa).

A Glutamine amidotransferase type-1 domain is found at 20–215; that stretch reads TILILDFGSQ…AIEICHAKPN (196 aa). Catalysis depends on cysteine 96, which acts as the Nucleophile. Residues histidine 189 and glutamate 191 contribute to the active site. One can recognise a GMPS ATP-PPase domain in the interval 216–413; sequence WSMENFVDKE…LGIEHSLVWR (198 aa). 244-250 is an ATP binding site; the sequence is SGGVDST. The XMP site is built by arginine 317, aspartate 475, lysine 531, and glutamate 537.

In terms of assembly, homodimer. Mg(2+) serves as cofactor.

It localises to the cytoplasm. The protein localises to the cytosol. It carries out the reaction XMP + L-glutamine + ATP + H2O = GMP + L-glutamate + AMP + diphosphate + 2 H(+). The protein operates within purine metabolism; GMP biosynthesis; GMP from XMP (L-Gln route): step 1/1. Its function is as follows. Catalyzes the conversion of xanthine monophosphate (XMP) to GMP in the presence of glutamine and ATP through an adenyl-XMP intermediate. The sequence is that of GMP synthase [glutamine-hydrolyzing] from Schizosaccharomyces pombe (strain 972 / ATCC 24843) (Fission yeast).